The sequence spans 181 residues: Protein Syd (181 aa).

It belongs to the Syd family.

The protein localises to the cell inner membrane. Functionally, interacts with the SecY protein in vivo. May bind preferentially to an uncomplexed state of SecY, thus functioning either as a chelating agent for excess SecY in the cell or as a regulatory factor that negatively controls the translocase function. The polypeptide is Protein Syd (Salmonella arizonae (strain ATCC BAA-731 / CDC346-86 / RSK2980)).